A 504-amino-acid chain; its full sequence is L-amino-acid oxidase (504 aa).

The N-terminal stretch at 1 to 18 is a signal peptide; it reads MNIFFMFSLLFLATLGSC. Cys-28 and Cys-191 are oxidised to a cystine. FAD contacts are provided by residues 61–62, 81–82, Arg-89, and 105–108; these read MS, EA, and GPMR. Substrate is bound at residue Arg-108. Asn-190 is a glycosylation site (N-linked (GlcNAc...) asparagine). His-241 contributes to the substrate binding site. Val-279 is an FAD binding site. Cys-349 and Cys-430 are disulfide-bonded. Asn-379 carries N-linked (GlcNAc...) asparagine glycosylation. Tyr-390 provides a ligand contact to substrate. FAD-binding positions include Glu-475 and 482-487; that span reads GWIDST. 482–483 contacts substrate; the sequence is GW.

This sequence belongs to the flavin monoamine oxidase family. FIG1 subfamily. In terms of assembly, homodimer; non-covalently linked. FAD is required as a cofactor. As to expression, expressed by the venom gland.

The protein resides in the secreted. It carries out the reaction an L-alpha-amino acid + O2 + H2O = a 2-oxocarboxylate + H2O2 + NH4(+). Functionally, catalyzes an oxidative deamination of predominantly hydrophobic and aromatic L-amino acids, thus producing hydrogen peroxide that may contribute to the diverse toxic effects of this enzyme. Exhibits diverse biological activities, such as hemorrhage, hemolysis, edema, apoptosis of vascular endothelial cells or tumor cell lines, antibacterial and antiparasitic activities, as well as regulation of platelet aggregation. Its effect on platelets is controversial, since it either induces aggregation or inhibits agonist-induced aggregation. These different effects are probably due to different experimental conditions. The chain is L-amino-acid oxidase from Echis ocellatus (Ocellated saw-scaled viper).